We begin with the raw amino-acid sequence, 635 residues long: MALQLDLPTLHDLRVVLNADFLAALAALLLLAVILVPLCSYISLYAWSAILAFKLRSPPANWEKSIVKGVQANGTSTLFGFGFWQAAAVRRQLILQSNDPSYYSVTHVSRRSEIAISPEDRNTEFRNRAQDSGAPRRVIYGFFHPYANAGGGGERVLWAAVKDTLMYDDNIICAIYCGEQDLPTRTSPSTVLDAAVSNFHVTELADKELRKRIVFIGMRGRRLVDPKTWPRFTLMMQAAGSVWMAWHGISTLVPDVFVDTMGYPFAYPLVSWVTHVPVAAYVHYPVISKDMLATVSLKQSPVRAALAVAKLVYWRVFALTYTFAGSYCSVVMTNSSWTNNHMQHMWWYNHKAEHIKIVYPPCGTQALSEIAMSEETSARSPNIVYIAQFRPEKRHDIVLREFNKFYKEYTEKYPNQPAPHLTFVGTVRNDDDKSRVYLLRLQARDLVNPDSVSFVLDAPFDKVRDILRTASMGVNAMWNEHFGIVVVEYMSAGLIPVVHNSGGPKCDIVVPYEGQSTGNSGTLSAMPSSTSIRSHYEAVPPGPTGFHFNCPGSDPTTDSGPSYDGEPIGTLAETLMRAFELSESDTHNMRARARESVKKRFSNEQFGSHWQVRMRILEKLEQIRRGHRLTRGDFD.

At 1 to 21 (MALQLDLPTLHDLRVVLNADF) the chain is on the lumenal side. A helical membrane pass occupies residues 22–42 (LAALAALLLLAVILVPLCSYI). Residues 43-231 (SLYAWSAILA…RLVDPKTWPR (189 aa)) lie on the Cytoplasmic side of the membrane. Residues 232-252 (FTLMMQAAGSVWMAWHGISTL) constitute an intramembrane region (helical). Residues 253–481 (VPDVFVDTMG…MGVNAMWNEH (229 aa)) are Cytoplasmic-facing. The segment at residues 482–502 (FGIVVVEYMSAGLIPVVHNSG) is an intramembrane region (helical). At 503 to 635 (GPKCDIVVPY…GHRLTRGDFD (133 aa)) the chain is on the cytoplasmic side.

The protein belongs to the glycosyltransferase group 1 family.

The protein localises to the endoplasmic reticulum membrane. It catalyses the reaction an alpha-D-Man-(1-&gt;3)-[alpha-D-Man-(1-&gt;6)]-beta-D-Man-(1-&gt;4)-beta-D-GlcNAc-(1-&gt;4)-alpha-D-GlcNAc-diphospho-di-trans,poly-cis-dolichol + 2 GDP-alpha-D-mannose = an alpha-D-Man-(1-&gt;2)-alpha-D-Man-(1-&gt;2)-alpha-D-Man-(1-&gt;3)-[alpha-D-Man-(1-&gt;6)]-beta-D-Man-(1-&gt;4)-beta-D-GlcNAc-(1-&gt;4)-alpha-D-GlcNAc-diphospho-di-trans,poly-cis-dolichol + 2 GDP + 2 H(+). Its pathway is protein modification; protein glycosylation. GDP-Man:Man(3)GlcNAc(2)-PP-Dol alpha-1,2-mannosyltransferase that operates in the biosynthetic pathway of dolichol-linked oligosaccharides, the glycan precursors employed in protein asparagine (N)-glycosylation. The assembly of dolichol-linked oligosaccharides begins on the cytosolic side of the endoplasmic reticulum membrane and finishes in its lumen. The sequential addition of sugars to dolichol pyrophosphate produces dolichol-linked oligosaccharides containing fourteen sugars, including two GlcNAcs, nine mannoses and three glucoses. Once assembled, the oligosaccharide is transferred from the lipid to nascent proteins by oligosaccharyltransferases. Catalyzes, on the cytoplasmic face of the endoplasmic reticulum, the addition of the fourth and fifth mannose residues to the dolichol-linked oligosaccharide chain, to produce Man(5)GlcNAc(2)-PP-dolichol core oligosaccharide. The polypeptide is GDP-Man:Man(3)GlcNAc(2)-PP-Dol alpha-1,2-mannosyltransferase (ALG11) (Yarrowia lipolytica (strain CLIB 122 / E 150) (Yeast)).